The following is a 394-amino-acid chain: Putative 8-amino-7-oxononanoate synthase (394 aa).

Arg-21 lines the substrate pocket. Residue 107-108 participates in pyridoxal 5'-phosphate binding; it reads GY. Position 132 (His-132) interacts with substrate. Residues Ser-180, 205–208, and 236–239 contribute to the pyridoxal 5'-phosphate site; these read DEAH and TLSK. Lys-239 carries the post-translational modification N6-(pyridoxal phosphate)lysine. A substrate-binding site is contributed by Thr-361.

It belongs to the class-II pyridoxal-phosphate-dependent aminotransferase family. BioF subfamily. Homodimer. Requires pyridoxal 5'-phosphate as cofactor.

It carries out the reaction 6-carboxyhexanoyl-[ACP] + L-alanine + H(+) = (8S)-8-amino-7-oxononanoate + holo-[ACP] + CO2. The protein operates within cofactor biosynthesis; biotin biosynthesis. Catalyzes the decarboxylative condensation of pimeloyl-[acyl-carrier protein] and L-alanine to produce 8-amino-7-oxononanoate (AON), [acyl-carrier protein], and carbon dioxide. In Acaryochloris marina (strain MBIC 11017), this protein is Putative 8-amino-7-oxononanoate synthase (bioF).